The sequence spans 93 residues: Small ribosomal subunit protein bS16 (93 aa).

The protein belongs to the bacterial ribosomal protein bS16 family.

The chain is Small ribosomal subunit protein bS16 from Opitutus terrae (strain DSM 11246 / JCM 15787 / PB90-1).